The primary structure comprises 83 residues: Putative beta-neurotoxin RjAa10f (83 aa).

An N-terminal signal peptide occupies residues 1 to 18 (MKILIFIIASFMLIGVWC). Residues 19-82 (KEGYPMGRDG…VWDPNNNKCV (64 aa)) form the LCN-type CS-alpha/beta domain. 4 disulfide bridges follow: cysteine 29-cysteine 81, cysteine 33-cysteine 55, cysteine 40-cysteine 62, and cysteine 44-cysteine 64.

This sequence belongs to the long (4 C-C) scorpion toxin superfamily. Sodium channel inhibitor family. Beta subfamily. As to expression, expressed by the venom gland.

The protein localises to the secreted. Beta toxins bind voltage-independently at site-4 of sodium channels (Nav) and shift the voltage of activation toward more negative potentials thereby affecting sodium channel activation and promoting spontaneous and repetitive firing. In Rhopalurus junceus (Caribbean blue scorpion), this protein is Putative beta-neurotoxin RjAa10f.